The primary structure comprises 311 residues: Sulfate adenylyltransferase subunit 2 (311 aa).

The protein belongs to the PAPS reductase family. CysD subfamily. In terms of assembly, heterodimer composed of CysD, the smaller subunit, and CysN.

The enzyme catalyses sulfate + ATP + H(+) = adenosine 5'-phosphosulfate + diphosphate. Its pathway is sulfur metabolism; hydrogen sulfide biosynthesis; sulfite from sulfate: step 1/3. Its function is as follows. With CysN forms the ATP sulfurylase (ATPS) that catalyzes the adenylation of sulfate producing adenosine 5'-phosphosulfate (APS) and diphosphate, the first enzymatic step in sulfur assimilation pathway. APS synthesis involves the formation of a high-energy phosphoric-sulfuric acid anhydride bond driven by GTP hydrolysis by CysN coupled to ATP hydrolysis by CysD. The sequence is that of Sulfate adenylyltransferase subunit 2 from Caulobacter vibrioides (strain ATCC 19089 / CIP 103742 / CB 15) (Caulobacter crescentus).